A 65-amino-acid chain; its full sequence is Large ribosomal subunit protein bL35 (65 aa).

Disordered regions lie at residues 1–23 (MPKI…GKVK) and 29–48 (GSHI…RQSH). Basic residues predominate over residues 33 to 43 (LAKKSRKRKRD).

Belongs to the bacterial ribosomal protein bL35 family.

This chain is Large ribosomal subunit protein bL35, found in Desulfatibacillum aliphaticivorans.